The chain runs to 268 residues: Protein limb expression 1 homolog (268 aa).

This sequence belongs to the LIX1 family. As to quaternary structure, interacts with ft (via intracellular domain) and ds (via intracellular domain).

The protein localises to the apical cell membrane. The protein resides in the cytoplasm. In terms of biological role, component of the Fat (ft) signaling pathway that functions in normal development of various organs such as the wing and leg. In developing imaginal disks, involved in regulating both the protein levels and apical localization of ft and ds. Involved in establishing planar cell polarity (PCP) along the anterior-posterior axis of the wing (the early Fz signaling event), probably by acting upstream of ds and ft to regulate Fz activity. The chain is Protein limb expression 1 homolog from Drosophila melanogaster (Fruit fly).